A 283-amino-acid polypeptide reads, in one-letter code: MAGAGLVTIKRRIKSITSTQKITKAMGLIATSKLRKVRKKLEANNKYCELFSSIVNELAMEAEQNNIYIKGNKSNKKLYIALNSDTGLCGGFNANVVNELNSIRSKEKEDFLLITMGQKGKMYFRRLNYNIESEYIDIPDVPTIKETEDVVYKALELYRNGEIGEINIVFTKFISTIKQNVIVEKLLPLEVKKVEKRNFIVKFEPSADEMIEDIVELHLRQKLLNCIINSKVSEQSSRMTAMDGATKNANDLLDELNLQYNRERQTAITQEITEIVGGAEALK.

This sequence belongs to the ATPase gamma chain family. In terms of assembly, F-type ATPases have 2 components, CF(1) - the catalytic core - and CF(0) - the membrane proton channel. CF(1) has five subunits: alpha(3), beta(3), gamma(1), delta(1), epsilon(1). CF(0) has three main subunits: a, b and c.

It localises to the cell membrane. Produces ATP from ADP in the presence of a proton gradient across the membrane. The gamma chain is believed to be important in regulating ATPase activity and the flow of protons through the CF(0) complex. This is ATP synthase gamma chain from Clostridium kluyveri (strain NBRC 12016).